A 278-amino-acid chain; its full sequence is Fe(II)/2-oxoglutarate-dependent dioxygenase nvfI (278 aa).

Belongs to the asaB hydroxylase/desaturase family.

The catalysed reaction is asnovolin A + 2-oxoglutarate + 2 O2 = fumigatonoid A + succinate + CO2. Its pathway is secondary metabolite biosynthesis; terpenoid biosynthesis. Its function is as follows. Fe(II)/2-oxoglutarate-dependent dioxygenase; part of the gene cluster that mediates the biosynthesis of novofumigatonin, a heavily oxygenated meroterpenoid containing a unique orthoester moiety. The first step of the pathway is the synthesis of 3,5-dimethylorsellinic acid (DMOA) by the polyketide synthase nvfA via condensation of one acetyl-CoA starter unit with 3 malonyl-CoA units and 2 methylations. DMOA is then converted to farnesyl-DMOA by the farnesyltransferase nvfB. Epoxydation by FAD-dependent monooxygenase nvfK, followed by a protonation-initiated cyclization catalyzed by the terpene cyclase nvfL leads to the production of asnavolin H. The short chain dehydrogenase nvfC then as a 3-OH dehydrogenase of asnovolin H to yield chemesin D. There are two branches to synthesize asnovolin A from chemesin D. In one branch, chemesin D undergoes Baeyer-Villiger oxidation by nvfH, methylation by nvfJ, and enoyl reduction by the nvfM D enoylreductase that reduces the double bond between C-5'and C-6', to form respectively asnovolin I, asnovolin K, and asnovolin A. In the other branch, the methylation precedes the Baeyer-Villiger oxidation and the enoyl reduction to yield asnovolin A via the asnovolin J intermediate. Asnovolin A is further converted to fumigatonoid A by the Fe(II)/2-oxoglutarate-dependent dioxygenase nvfI that catalyzes an endoperoxidation reaction. The alpha/beta hydrolase nvfD then acts as an epimerase that converts fumigatonoid A to its C-5' epimer, which then undergoes spontaneous or nvfD-catalyzed lactonization. The following step utilizes the ketoreductase nvfG to produce fumigatonoid B. The dioxygenase nvfE further converts fumigatonoid B into fumigatonoid C. Finally the Fe(II)/2-oxoglutarate-dependent dioxygenase nvfF catalyzes two rounds of oxidation to transform fumigatonoid C into the end product, novofumigatonin A. This Aspergillus novofumigatus (strain IBT 16806) protein is Fe(II)/2-oxoglutarate-dependent dioxygenase nvfI.